A 565-amino-acid chain; its full sequence is Carboxylesterase 1D (565 aa).

A signal peptide spans 1–18; that stretch reads MRLYPLVWLFLAACTAWG. Asn-79 carries N-linked (GlcNAc...) asparagine glycosylation. Residues Cys-87 and Cys-116 are joined by a disulfide bond. Residue Ser-221 is the Acyl-ester intermediate of the active site. Residues Cys-273 and Cys-284 are joined by a disulfide bond. The Charge relay system role is filled by Glu-353. Lys-382 bears the N6-succinyllysine mark. The active-site Charge relay system is His-466. An N-linked (GlcNAc...) asparagine glycan is attached at Asn-489. A Prevents secretion from ER motif is present at residues 562–565; the sequence is HVEL.

This sequence belongs to the type-B carboxylesterase/lipase family. Homotrimer. Detected in liver, lung and testis, but not in kidney (at protein level).

It is found in the endoplasmic reticulum lumen. Its subcellular location is the cytoplasm. The protein localises to the cytosol. It localises to the lipid droplet. The protein resides in the microsome. The catalysed reaction is all-trans-retinyl hexadecanoate + H2O = all-trans-retinol + hexadecanoate + H(+). It catalyses the reaction a carboxylic ester + H2O = an alcohol + a carboxylate + H(+). It carries out the reaction a long-chain fatty acyl ethyl ester + H2O = a long-chain fatty acid + ethanol + H(+). Its activity is regulated as follows. FAEE-synthesizing and PNPB-hydrolyzing activities are both inhibited by DFP. Functionally, major lipase in white adipose tissue. Involved in the metabolism of xenobiotics and of natural substrates. Hydrolyzes triacylglycerols and monoacylglycerols, with a preference for monoacylglycerols. The susceptibility of the substrate increases with decreasing acyl chain length of the fatty acid moiety. Catalyzes the synthesis of fatty acid ethyl esters. Hydrolyzes retinyl esters. The chain is Carboxylesterase 1D from Rattus norvegicus (Rat).